We begin with the raw amino-acid sequence, 118 residues long: uncharacterized protein (118 aa).

This sequence belongs to the HesB/IscA family. Ycf83 subfamily.

This is an uncharacterized protein from Synechocystis sp. (strain ATCC 27184 / PCC 6803 / Kazusa).